A 236-amino-acid polypeptide reads, in one-letter code: Ribose-5-phosphate isomerase A (236 aa).

Substrate-binding positions include 33 to 36 (TGST), 90 to 93 (DGAD), and 103 to 106 (KGGG). The Proton acceptor role is filled by Glu-112. Lys-130 is a substrate binding site.

It belongs to the ribose 5-phosphate isomerase family. In terms of assembly, homodimer.

It catalyses the reaction aldehydo-D-ribose 5-phosphate = D-ribulose 5-phosphate. It functions in the pathway carbohydrate degradation; pentose phosphate pathway; D-ribose 5-phosphate from D-ribulose 5-phosphate (non-oxidative stage): step 1/1. In terms of biological role, catalyzes the reversible conversion of ribose-5-phosphate to ribulose 5-phosphate. This Trichormus variabilis (strain ATCC 29413 / PCC 7937) (Anabaena variabilis) protein is Ribose-5-phosphate isomerase A.